The following is a 258-amino-acid chain: UPF0246 protein plu0566 (258 aa).

The protein belongs to the UPF0246 family.

This chain is UPF0246 protein plu0566, found in Photorhabdus laumondii subsp. laumondii (strain DSM 15139 / CIP 105565 / TT01) (Photorhabdus luminescens subsp. laumondii).